The primary structure comprises 618 residues: Glucose starvation modulator protein 1 (618 aa).

A DNA-binding region (zn(2)-C6 fungal-type) is located at residues 20–48 (CEFCHTKHIQCDVGRPCQNCLKRNIGKFC). The disordered stretch occupies residues 325–352 (ANANTHPSHNAKLESECDSSSHSDADLE). Basic and acidic residues predominate over residues 335-352 (AKLESECDSSSHSDADLE). The PAS domain occupies 466-538 (LLDLENMAKL…QIFNELLAFG (73 aa)).

The protein belongs to the ERT1/acuK family.

The protein resides in the nucleus. Functionally, transcription factor which regulates nonfermentable carbon utilization. Binds specifically to 5'-CGGN(8)CGG-3' and 5'-CGGN(9)CGG-3' sequences in the promoter region. The protein is Glucose starvation modulator protein 1 (GSM1) of Saccharomyces cerevisiae (strain RM11-1a) (Baker's yeast).